The primary structure comprises 371 residues: MLNEFIAIRRDLHQIPETGYKELKTQAYLLAYISKLPNKHLEVKKWRTGILVLVKGTKPEKTIGYRTDIDALPITEETGLPFESNHVGNMHACGHDLHMSIALGVLTHFASKPAKDNLLFVFQPAEEGPGGAKPIMESEEFAAWRPDTIYGLHIAPEYKVGEIAIKPGLLFANTSELFISFKGKGGHAAYPHLANDMVVAASAFVGQMQTIISRNIDPMDSAVITIGRIHGGEIQNVIAETAFLDGTIRTLSPETMEIVWTRLKQLAKGWEEAYQCEVEFHPGSDYYQVDNEPLETEEFIRFLKEHYPESYVPARSAMTGEDFGYFLSEIKGFMFWLGVDSEYSLHHAKLNPKEEAIPFAIDVLINFLESK.

Asp-68 is an active-site residue. Glu-127 functions as the Proton acceptor in the catalytic mechanism.

It belongs to the peptidase M20A family. N-acetyldiaminopimelate deacetylase subfamily.

The catalysed reaction is N-acetyl-(2S,6S)-2,6-diaminopimelate + H2O = (2S,6S)-2,6-diaminopimelate + acetate. Its pathway is amino-acid biosynthesis; L-lysine biosynthesis via DAP pathway; LL-2,6-diaminopimelate from (S)-tetrahydrodipicolinate (acetylase route): step 3/3. Its function is as follows. Catalyzes the conversion of N-acetyl-diaminopimelate to diaminopimelate and acetate. This Listeria welshimeri serovar 6b (strain ATCC 35897 / DSM 20650 / CCUG 15529 / CIP 8149 / NCTC 11857 / SLCC 5334 / V8) protein is N-acetyldiaminopimelate deacetylase.